We begin with the raw amino-acid sequence, 479 residues long: DNA polymerase IV (479 aa).

Residues 7–189 (ILHLDMDAFF…MTVRTLPGVG (183 aa)) enclose the UmuC domain. The Mg(2+) site is built by D11 and D105. E106 is an active-site residue. 2 disordered regions span residues 357 to 400 (AGDR…GHGW) and 430 to 479 (DPEL…TSRP). Residues 381–396 (AERRWPSGHDVRHTEL) show a composition bias toward basic and acidic residues.

Belongs to the DNA polymerase type-Y family. As to quaternary structure, monomer. Mg(2+) is required as a cofactor.

Its subcellular location is the cytoplasm. The catalysed reaction is DNA(n) + a 2'-deoxyribonucleoside 5'-triphosphate = DNA(n+1) + diphosphate. Its function is as follows. Poorly processive, error-prone DNA polymerase involved in untargeted mutagenesis. Copies undamaged DNA at stalled replication forks, which arise in vivo from mismatched or misaligned primer ends. These misaligned primers can be extended by PolIV. Exhibits no 3'-5' exonuclease (proofreading) activity. May be involved in translesional synthesis, in conjunction with the beta clamp from PolIII. This Streptomyces coelicolor (strain ATCC BAA-471 / A3(2) / M145) protein is DNA polymerase IV.